The chain runs to 267 residues: Formamidopyrimidine-DNA glycosylase (267 aa).

Catalysis depends on proline 2, which acts as the Schiff-base intermediate with DNA. Glutamate 3 (proton donor) is an active-site residue. Residue lysine 58 is the Proton donor; for beta-elimination activity of the active site. 3 residues coordinate DNA: histidine 91, arginine 110, and arginine 152. An FPG-type zinc finger spans residues 233–267 (DVYGRGTDACTRCGGALEEIRLGNRSTVFCPRCQT). Arginine 257 (proton donor; for delta-elimination activity) is an active-site residue.

It belongs to the FPG family. Monomer. The cofactor is Zn(2+).

The enzyme catalyses Hydrolysis of DNA containing ring-opened 7-methylguanine residues, releasing 2,6-diamino-4-hydroxy-5-(N-methyl)formamidopyrimidine.. It catalyses the reaction 2'-deoxyribonucleotide-(2'-deoxyribose 5'-phosphate)-2'-deoxyribonucleotide-DNA = a 3'-end 2'-deoxyribonucleotide-(2,3-dehydro-2,3-deoxyribose 5'-phosphate)-DNA + a 5'-end 5'-phospho-2'-deoxyribonucleoside-DNA + H(+). Involved in base excision repair of DNA damaged by oxidation or by mutagenic agents. Acts as a DNA glycosylase that recognizes and removes damaged bases. Has a preference for oxidized purines, such as 7,8-dihydro-8-oxoguanine (8-oxoG). Has AP (apurinic/apyrimidinic) lyase activity and introduces nicks in the DNA strand. Cleaves the DNA backbone by beta-delta elimination to generate a single-strand break at the site of the removed base with both 3'- and 5'-phosphates. This is Formamidopyrimidine-DNA glycosylase from Geobacter metallireducens (strain ATCC 53774 / DSM 7210 / GS-15).